The primary structure comprises 248 residues: Glucosamine-6-phosphate isomerase (248 aa).

The Proton acceptor; for enolization step role is filled by D68. E137 functions as the For ring-opening step in the catalytic mechanism. H139 (proton acceptor; for ring-opening step) is an active-site residue. E144 (for ring-opening step) is an active-site residue.

The protein belongs to the glucosamine/galactosamine-6-phosphate isomerase family. In terms of assembly, monomer.

The enzyme catalyses alpha-D-glucosamine 6-phosphate + H2O = beta-D-fructose 6-phosphate + NH4(+). This is Glucosamine-6-phosphate isomerase (NAG1) from Candida albicans (strain SC5314 / ATCC MYA-2876) (Yeast).